Here is a 126-residue protein sequence, read N- to C-terminus: MKWTFILAVAAGGALGSVARYLVGIGFGKWLGPKFPWGTLFINVTGSLLIGIFAGLFAVRWSLPQAARIFLVVGICGGYTTFSTFSLDTFYLIERGEMASAAAYMIGSVVLSVGALIAGIQIVRVI.

Helical transmembrane passes span 5–25 (FILAVAAGGALGSVARYLVGI), 39–59 (TLFINVTGSLLIGIFAGLFAV), 69–89 (IFLVVGICGGYTTFSTFSLDT), and 103–123 (AYMIGSVVLSVGALIAGIQIV). Residues G77 and T80 each contribute to the Na(+) site.

This sequence belongs to the fluoride channel Fluc/FEX (TC 1.A.43) family.

It is found in the cell inner membrane. It carries out the reaction fluoride(in) = fluoride(out). Na(+) is not transported, but it plays an essential structural role and its presence is essential for fluoride channel function. Fluoride-specific ion channel. Important for reducing fluoride concentration in the cell, thus reducing its toxicity. The protein is Fluoride-specific ion channel FluC of Nitrobacter winogradskyi (strain ATCC 25391 / DSM 10237 / CIP 104748 / NCIMB 11846 / Nb-255).